The following is a 188-amino-acid chain: Pyridoxal 5'-phosphate synthase subunit PdxT (188 aa).

46-48 is a binding site for L-glutamine; it reads GES. The Nucleophile role is filled by C78. Residues R105 and 134–135 contribute to the L-glutamine site; that span reads IR. Catalysis depends on charge relay system residues H170 and E172.

Belongs to the glutaminase PdxT/SNO family. In the presence of PdxS, forms a dodecamer of heterodimers. Only shows activity in the heterodimer.

It catalyses the reaction aldehydo-D-ribose 5-phosphate + D-glyceraldehyde 3-phosphate + L-glutamine = pyridoxal 5'-phosphate + L-glutamate + phosphate + 3 H2O + H(+). The enzyme catalyses L-glutamine + H2O = L-glutamate + NH4(+). It participates in cofactor biosynthesis; pyridoxal 5'-phosphate biosynthesis. Catalyzes the hydrolysis of glutamine to glutamate and ammonia as part of the biosynthesis of pyridoxal 5'-phosphate. The resulting ammonia molecule is channeled to the active site of PdxS. The sequence is that of Pyridoxal 5'-phosphate synthase subunit PdxT from Moorella thermoacetica (strain ATCC 39073 / JCM 9320).